We begin with the raw amino-acid sequence, 706 residues long: MDAHIANETKHLLVHGNSKTRALVHIIVPDACLKKAGVDPVKLSDRHRASPSAAPVFRVFAQTRYHATGECSLWRTVFAGYVPSGAIVSALVPTVPADHPRLFQSTPDSGGLFVSLEIECDADGRFDAFTLVALRVDIADDPRTTEVLFTYDELLPPGTRYGADSKRVALLCRQFVAYVNSHPTVSQSAVTAASHIEAAVAEDVKSASGPQVSYGARIDPAEYLFSGGGFDNHQALARLEDDDKEIMSLIRRASEVIAKRNPVRVLSNPEVNGDAHRRQCVASGLRQGARGAHASDSHARVGFNSSIHDATALLLGLEPPDSGRFVNSGPQRHLPPQGPRSPASRDCQSGMLDDVLLLTPENSNPLTPLDWLDVGHAAVAGGDTPRDVWRRRPISLVARKHYGTCETFVVVSYENSTAWGGRRARDEHLAGSINPPVMQACVAAGVDHPRNLPPETRGELIAKFPMLTVPLGDTPPPVAAFDAAAELALIDHFRGACVSALLKAISERLRAEPRMSQLIEYDIPNNNRDCIISVAQRAPELLEAVALAIQNVTVTEFCNSALMLSALSHLNILSGNKRGRLPYHRSWLPSLAGGADAFLFDYYSSGGEVVKVSPVPLAILVTATRTGQHSCRFARGAPDSSSKTYERYLPGECYAYICVGLNRSFEALVVLPGGFACRASAARKLAWPAHLVEPILERYCWTIPSH.

The tract at residues 321–347 is disordered; that stretch reads DSGRFVNSGPQRHLPPQGPRSPASRDC.

This sequence belongs to the herpesviridae CVC1 protein family. Interacts (via C-terminus) with capsid vertex component 2/CVC2.

The protein localises to the virion. Its subcellular location is the host nucleus. In terms of biological role, capsid vertex-specific component that plays a role during viral DNA encapsidation, assuring correct genome cleavage and presumably stabilizing capsids that contain full-length viral genomes. This Equus caballus (Horse) protein is Capsid vertex component 1.